Consider the following 37-residue polypeptide: Large ribosomal subunit protein bL36B (37 aa).

Belongs to the bacterial ribosomal protein bL36 family.

In Kineococcus radiotolerans (strain ATCC BAA-149 / DSM 14245 / SRS30216), this protein is Large ribosomal subunit protein bL36B.